Consider the following 179-residue polypeptide: UPF0227 protein SO_2251 (179 aa).

The protein belongs to the UPF0227 family.

The polypeptide is UPF0227 protein SO_2251 (Shewanella oneidensis (strain ATCC 700550 / JCM 31522 / CIP 106686 / LMG 19005 / NCIMB 14063 / MR-1)).